Reading from the N-terminus, the 335-residue chain is MKNLILAIESSCDDSSIAIIDKNTLECKFHKKISQELDHSIYGGVVPELAARLHSEALPKMLKQCKEHFKNLCAIAVTNEPGLSVSLLSGISMAKTLASALNLPLIPINHLKGHIYSLFLEEKISLDMGILLVSGGHTMVLYLKDDASLELLASTNDDSFGESFDKVAKMMNLGYPGGVIIENLAKNAKLKNISFNTPLKHSKELAFSFSGLKNAVRLEILKHENLNEDTKAEIAYAFENTACDHIMDKLEKIFNLYKFKNFGVVGGASANLNLRSRLQNLCQKYNANLKLAPLKFCSDNALMIARAAVDAYEKKEFVSVEEDILSPKNKNFSRI.

Fe cation contacts are provided by His-110 and His-114. Residues 132–136 (LVSGG), Asp-165, Gly-178, and Asn-271 each bind substrate. Residue Asp-299 coordinates Fe cation.

This sequence belongs to the KAE1 / TsaD family. It depends on Fe(2+) as a cofactor.

Its subcellular location is the cytoplasm. It catalyses the reaction L-threonylcarbamoyladenylate + adenosine(37) in tRNA = N(6)-L-threonylcarbamoyladenosine(37) in tRNA + AMP + H(+). Its function is as follows. Required for the formation of a threonylcarbamoyl group on adenosine at position 37 (t(6)A37) in tRNAs that read codons beginning with adenine. Is involved in the transfer of the threonylcarbamoyl moiety of threonylcarbamoyl-AMP (TC-AMP) to the N6 group of A37, together with TsaE and TsaB. TsaD likely plays a direct catalytic role in this reaction. This Campylobacter jejuni subsp. jejuni serotype O:2 (strain ATCC 700819 / NCTC 11168) protein is tRNA N6-adenosine threonylcarbamoyltransferase.